The primary structure comprises 119 residues: Large ribosomal subunit protein P3 (119 aa).

The interval 81 to 119 (GAAAGAASGGAAAEAPKAEEKKEEEKEESEDDLGFSLFD) is disordered. A compositionally biased stretch (low complexity) spans 84 to 95 (AGAASGGAAAEA).

Belongs to the eukaryotic ribosomal protein P1/P2 family. Post-translationally, phosphorylated.

Its function is as follows. Plays an important role in the elongation step of protein synthesis. In Oryza sativa subsp. japonica (Rice), this protein is Large ribosomal subunit protein P3.